A 104-amino-acid chain; its full sequence is Probable guanidinium efflux system subunit GdnD (104 aa).

The next 4 membrane-spanning stretches (helical) occupy residues 3–23 (WICL…MNQF), 31–51 (WIFL…LAME), 58–78 (AYAV…ILFY), and 84–104 (GKRI…KLIS).

This sequence belongs to the drug/metabolite transporter (DMT) superfamily. Small multidrug resistance (SMR) (TC 2.A.7.1) family. YkkC/YkkD subfamily. The efflux pump is composed of GdnC and GdnD.

The protein resides in the cell membrane. In terms of biological role, probably involved in guanidinium transport. The chain is Probable guanidinium efflux system subunit GdnD from Bacillus licheniformis (strain ATCC 14580 / DSM 13 / JCM 2505 / CCUG 7422 / NBRC 12200 / NCIMB 9375 / NCTC 10341 / NRRL NRS-1264 / Gibson 46).